The primary structure comprises 733 residues: 2'-5'-oligoadenylate synthase 2 (733 aa).

Residue Gly2 is the site of N-myristoyl glycine attachment. 2 OAS domain regions span residues 47–365 and 373–713; these read VPSQ…CWDV and TPSH…WKVP. At Lys408 the chain carries N6-acetyllysine. Residue Ser427 participates in ATP binding. Positions 439, 441, and 510 each coordinate Mg(2+). Residues Arg574 and Lys577 each coordinate ATP.

The protein belongs to the 2-5A synthase family. Homodimer. Mg(2+) is required as a cofactor. Post-translationally, myristoylation is not essential for its activity. Glycosylated. Glycosylation is essential for its activity.

The protein localises to the cytoplasm. It is found in the perinuclear region. The enzyme catalyses 3 ATP = 5'-triphosphoadenylyl-(2'-&gt;5')-adenylyl-(2'-&gt;5')-adenosine + 2 diphosphate. Produced as a latent enzyme which is activated by double stranded RNA (dsRNA) generated during the course of viral infection. The dsRNA activator must be at least 15 nucleotides long, and no modification of the 2'-hydroxyl group is tolerated. ssRNA or dsDNA do not act as activators. Strongly inhibited by copper, iron and zinc ions. Partially inhibited by cobalt and nickel ions. Interferon-induced, dsRNA-activated antiviral enzyme which plays a critical role in cellular innate antiviral response. Activated by detection of double stranded RNA (dsRNA): polymerizes higher oligomers of 2'-5'-oligoadenylates (2-5A) from ATP which then bind to the inactive monomeric form of ribonuclease L (RNASEL) leading to its dimerization and subsequent activation. Activation of RNASEL leads to degradation of cellular as well as viral RNA, resulting in the inhibition of protein synthesis, thus terminating viral replication. Can mediate the antiviral effect via the classical RNASEL-dependent pathway or an alternative antiviral pathway independent of RNASEL. In addition, it may also play a role in other cellular processes such as apoptosis, cell growth, differentiation and gene regulation. May act as a negative regulator of lactation, stopping lactation in virally infected mammary gland lobules, thereby preventing transmission of viruses to neonates. Non-infected lobules would not be affected, allowing efficient pup feeding during infection. In Rattus norvegicus (Rat), this protein is 2'-5'-oligoadenylate synthase 2 (Oas2).